The sequence spans 313 residues: Olfactory receptor 56A5 (313 aa).

Residues methionine 1–proline 33 lie on the Extracellular side of the membrane. Residues asparagine 6 and asparagine 7 are each glycosylated (N-linked (GlcNAc...) asparagine). The chain crosses the membrane as a helical span at residues leucine 34 to leucine 54. Topologically, residues glutamate 55 to serine 67 are cytoplasmic. Residues leucine 68–phenylalanine 88 traverse the membrane as a helical segment. Topologically, residues tryptophan 89–cysteine 100 are extracellular. Cysteine 100 and cysteine 182 are joined by a disulfide. The helical transmembrane segment at phenylalanine 101–methionine 121 threads the bilayer. At alanine 122–arginine 146 the chain is on the cytoplasmic side. Residues alanine 147–serine 167 traverse the membrane as a helical segment. Residues arginine 168–phenylalanine 203 lie on the Extracellular side of the membrane. N-linked (GlcNAc...) asparagine glycosylation is found at asparagine 184 and asparagine 198. Residues valine 204 to isoleucine 224 traverse the membrane as a helical segment. Over leucine 225–serine 246 the chain is Cytoplasmic. Residues histidine 247–alanine 267 form a helical membrane-spanning segment. The Extracellular segment spans residues arginine 268–proline 276. The chain crosses the membrane as a helical span at residues isoleucine 277–valine 297. Over arginine 298–leucine 313 the chain is Cytoplasmic.

It belongs to the G-protein coupled receptor 1 family.

It localises to the cell membrane. Odorant receptor. This chain is Olfactory receptor 56A5 (OR56A5), found in Homo sapiens (Human).